Here is a 396-residue protein sequence, read N- to C-terminus: Formate-dependent phosphoribosylglycinamide formyltransferase (396 aa).

N(1)-(5-phospho-beta-D-ribosyl)glycinamide-binding positions include E24–L25 and E84. ATP is bound by residues R116, K157, S162–Q167, E197–V200, and E205. In terms of domain architecture, ATP-grasp spans R121–L310. Residues E269 and E281 each coordinate Mg(2+). N(1)-(5-phospho-beta-D-ribosyl)glycinamide-binding positions include D288, K359, and R366–R367.

The protein belongs to the PurK/PurT family. Homodimer.

The enzyme catalyses N(1)-(5-phospho-beta-D-ribosyl)glycinamide + formate + ATP = N(2)-formyl-N(1)-(5-phospho-beta-D-ribosyl)glycinamide + ADP + phosphate + H(+). The protein operates within purine metabolism; IMP biosynthesis via de novo pathway; N(2)-formyl-N(1)-(5-phospho-D-ribosyl)glycinamide from N(1)-(5-phospho-D-ribosyl)glycinamide (formate route): step 1/1. Functionally, involved in the de novo purine biosynthesis. Catalyzes the transfer of formate to 5-phospho-ribosyl-glycinamide (GAR), producing 5-phospho-ribosyl-N-formylglycinamide (FGAR). Formate is provided by PurU via hydrolysis of 10-formyl-tetrahydrofolate. The sequence is that of Formate-dependent phosphoribosylglycinamide formyltransferase from Psychromonas ingrahamii (strain DSM 17664 / CCUG 51855 / 37).